Here is a 503-residue protein sequence, read N- to C-terminus: Depupylase (503 aa).

Mg(2+) contacts are provided by Glu-8 and Tyr-92. The Proton acceptor role is filled by Asp-94. A Mg(2+)-binding site is contributed by Glu-99. 101-102 (ST) is an ATP binding site. Mg(2+) is bound at residue His-155. ATP is bound by residues Asn-157 and Arg-239. Mg(2+) is bound at residue His-241.

The protein belongs to the Pup ligase/Pup deamidase family. Pup deamidase subfamily. As to quaternary structure, likely interacts with the C-terminal half of the prokaryotic ubiquitin-like protein Pup. Requires ATP as cofactor.

It functions in the pathway protein degradation; proteasomal Pup-dependent pathway. In terms of biological role, displays depupylase (DPUP) activity, removing conjugated Pup from target proteins; is thus involved in the recycling of Pup and may function similarly to deubiquitinases (DUBs) in eukaryotes to prevent or promote proteasomal degradation of certain proteins. Is also able to catalyze the deamidation of the C-terminal glutamine to glutamate in a variant of the prokaryotic ubiquitin-like protein Pup; however, since Pup from A.cellulolyticus possesses a C-terminal glutamate, this deamidase activity may be of no significance in vivo. This Acidothermus cellulolyticus (strain ATCC 43068 / DSM 8971 / 11B) protein is Depupylase (dop).